The sequence spans 187 residues: dCTP deaminase, dUMP-forming (187 aa).

DCTP-binding positions include 101 to 106 and D119; that span reads KSSLGR. E129 serves as the catalytic Proton donor/acceptor. 3 residues coordinate dCTP: Q148, Y162, and Q174.

The protein belongs to the dCTP deaminase family. In terms of assembly, homotrimer.

The catalysed reaction is dCTP + 2 H2O = dUMP + NH4(+) + diphosphate. Its pathway is pyrimidine metabolism; dUMP biosynthesis; dUMP from dCTP: step 1/1. In terms of biological role, bifunctional enzyme that catalyzes both the deamination of dCTP to dUTP and the hydrolysis of dUTP to dUMP without releasing the toxic dUTP intermediate. The sequence is that of dCTP deaminase, dUMP-forming from Corynebacterium kroppenstedtii (strain DSM 44385 / JCM 11950 / CIP 105744 / CCUG 35717).